Reading from the N-terminus, the 473-residue chain is Aspartyl/glutamyl-tRNA(Asn/Gln) amidotransferase subunit B (473 aa).

The protein belongs to the GatB/GatE family. GatB subfamily. In terms of assembly, heterotrimer of A, B and C subunits.

It catalyses the reaction L-glutamyl-tRNA(Gln) + L-glutamine + ATP + H2O = L-glutaminyl-tRNA(Gln) + L-glutamate + ADP + phosphate + H(+). The enzyme catalyses L-aspartyl-tRNA(Asn) + L-glutamine + ATP + H2O = L-asparaginyl-tRNA(Asn) + L-glutamate + ADP + phosphate + 2 H(+). In terms of biological role, allows the formation of correctly charged Asn-tRNA(Asn) or Gln-tRNA(Gln) through the transamidation of misacylated Asp-tRNA(Asn) or Glu-tRNA(Gln) in organisms which lack either or both of asparaginyl-tRNA or glutaminyl-tRNA synthetases. The reaction takes place in the presence of glutamine and ATP through an activated phospho-Asp-tRNA(Asn) or phospho-Glu-tRNA(Gln). The sequence is that of Aspartyl/glutamyl-tRNA(Asn/Gln) amidotransferase subunit B from Finegoldia magna (strain ATCC 29328 / DSM 20472 / WAL 2508) (Peptostreptococcus magnus).